The primary structure comprises 291 residues: Porphobilinogen deaminase (291 aa).

Residue Cys-233 is modified to S-(dipyrrolylmethanemethyl)cysteine.

It belongs to the HMBS family. As to quaternary structure, monomer. It depends on dipyrromethane as a cofactor.

The enzyme catalyses 4 porphobilinogen + H2O = hydroxymethylbilane + 4 NH4(+). The protein operates within porphyrin-containing compound metabolism; protoporphyrin-IX biosynthesis; coproporphyrinogen-III from 5-aminolevulinate: step 2/4. Its function is as follows. Tetrapolymerization of the monopyrrole PBG into the hydroxymethylbilane pre-uroporphyrinogen in several discrete steps. The chain is Porphobilinogen deaminase (hemC) from Ruminiclostridium josui (Clostridium josui).